The primary structure comprises 286 residues: Ribosome-inactivating protein momordin I (286 aa).

An N-terminal signal peptide occupies residues 1–23 (MSRFSVLSFLILAIFLGGSIVKG). E183 is a catalytic residue. An N-linked (GlcNAc...) asparagine glycan is attached at N250. Residues 270–286 (AEGDNGDVSTTHGFSSY) constitute a propeptide, removed in mature form.

Belongs to the ribosome-inactivating protein family. Type 1 RIP subfamily.

It carries out the reaction Endohydrolysis of the N-glycosidic bond at one specific adenosine on the 28S rRNA.. This is Ribosome-inactivating protein momordin I from Momordica charantia (Bitter gourd).